The chain runs to 803 residues: Zinc finger and BTB domain-containing protein 17 (803 aa).

A BTB domain is found at 1–104 (MDFPQHSQHV…VATFLQMQDI (104 aa)). Positions 116–295 (EPATSPGGNA…GLRSGTYGDR (180 aa)) are disordered. Phosphoserine is present on serine 120. A compositionally biased stretch (basic and acidic residues) spans 132–142 (GGDKRAKEEKV). 2 stretches are compositionally biased toward low complexity: residues 171–180 (GQAQSAASGA) and 206–217 (AAAEAEAALSES). 2 stretches are compositionally biased toward acidic residues: residues 233–244 (EQKEQEEQEEEG) and 261–272 (EAPEENENEESA). The tract at residues 269–308 (EESAGTDSGQELGSEARGLRSGTYGDRTESKAYGSVIHKC) is interaction with MYC. 13 consecutive C2H2-type zinc fingers follow at residues 306-328 (HKCE…IRIH), 334-356 (FSCR…EKTH), 362-384 (YGCE…KKRH), 390-412 (YRCE…QLVH), 418-440 (YQCD…LETH), 446-468 (HKCP…LKIH), 474-496 (LKCR…LRIH), 502-524 (YVCI…VRIH), 530-552 (CQCV…VRQH), 558-580 (YVCE…IRHH), 586-608 (HKCS…IIIH), 614-637 (YLCD…KTVH), and 717-739 (YACD…VRIH). Lysine 397 is covalently cross-linked (Glycyl lysine isopeptide (Lys-Gly) (interchain with G-Cter in ubiquitin)). Lysine 481 participates in a covalent cross-link: Glycyl lysine isopeptide (Lys-Gly) (interchain with G-Cter in ubiquitin). The tract at residues 637–718 (HQGKAGIKIL…EDPNTHILYA (82 aa)) is interaction with MYC. An interaction with HCFC1 region spans residues 637–803 (HQGKAGIKIL…TAPECPPPAE (167 aa)). The tract at residues 779-803 (RDGAEGQPALAETSPTAPECPPPAE) is disordered.

It belongs to the krueppel C2H2-type zinc-finger protein family. Homooligomerizes (via the BTB/POZ domain), multimerization is required for DNA binding. Interacts (via the C-terminal zinc fingers) with GIF1; the interaction results in the recruitment of MYB to the CDKN1A/p21 and CDKN1B promoters and repression of transcription. Interacts with TRAF2, interfering with the binding of UBC13 to TRAF2, and inhibiting TRAF2 E3 ligase activity. Interacts with MYC (via the C-terminal helix-loop-helix motif); the interaction inhibits ZBTB17 transactivation and growth arrest activities and renders it insoluble in the nucleus. Also interacts with HCFC1, MAGEA4 and TMPRSS11A. Interacts with BCL6; the interaction inhibits ZBTB17 transactivation activity on target genes involved in cell cycle arrest. Interacts with ZBTB49 isoform 3/ZNF509S1; this interaction blocks ZBTB17-mediated repression of RB1. Undergoes 'Lys-48'-linked polyubiquitination at Lys-397 and Lys-481 and subsequent proteasomal degradation in a TRAF2-dependent manner. As to expression, expressed in germinal center B-cells.

The protein resides in the nucleus. Transcription factor that can function as an activator or repressor depending on its binding partners, and by targeting negative regulators of cell cycle progression. Plays a critical role in early lymphocyte development, where it is essential to prevent apoptosis in lymphoid precursors, allowing them to survive in response to IL7 and undergo proper lineage commitment. Has been shown to bind to the promoters of adenovirus major late protein and cyclin D1 and activate transcription. Required for early embryonic development during gastrulation. Represses RB1 transcription; this repression can be blocked by interaction with ZBTB49 isoform 3/ZNF509S1. The chain is Zinc finger and BTB domain-containing protein 17 (ZBTB17) from Homo sapiens (Human).